A 224-amino-acid polypeptide reads, in one-letter code: Thiamine-triphosphatase (224 aa).

Position 2 is an N-acetylalanine (alanine 2). Residues 5–201 enclose the CYTH domain; that stretch reads LIEVERKFTP…AKLLVYLQRF (197 aa). Mg(2+) contacts are provided by glutamate 7 and glutamate 9. Substrate contacts are provided by lysine 11, arginine 55, arginine 57, lysine 65, and arginine 125. 3 residues coordinate Mg(2+): aspartate 145, glutamate 157, and glutamate 159. Substrate is bound at residue glutamate 157. Lysine 193 contributes to the substrate binding site.

It belongs to the ThTPase family. Monomer. Mg(2+) is required as a cofactor.

Its subcellular location is the cytoplasm. The catalysed reaction is thiamine triphosphate + H2O = thiamine diphosphate + phosphate + H(+). In terms of biological role, hydrolase highly specific for thiamine triphosphate (ThTP). This chain is Thiamine-triphosphatase (Thtpa), found in Rattus norvegicus (Rat).